A 494-amino-acid chain; its full sequence is MPLLMDGLAYAGAIWSLIVFCVQAIGLYQLFRSYSRPPPPPVSPSLTSEDVPHVTVIRPVKGLEPRLYECLISTLQQSYPRDKLSVHLCISSKEDPAYPVLKKVVVEYSATHDVRLFVETEDPLLYGTTGDTRNLGPNPKIRNISHAYREAKGDIIWIIDCNIWVSKGTAGRMVDKLCGFPAGSRPYKFVHQLPLSVDVTPPQDSGVLRTGGGRLDEMFMATTHGKFYSAINTVGVAPCICGKSNMFRKSHLDRLTDPAHNPILPKETATRPRGIDYFSAYICEDHLIGDLLWRSQVPGHGNHGLVFGDLALQPMMNNSVGSYIARRVRWLRVRKWTVLLATLVEPGVESMVCCMAFAHALTTTPWCPNPADWPIPHTWTALWSIWLAAIAVWATLDYVVYHFLHSCRSIEKDADSPDFAQGNELMKRPFGAWILAWIGREILALPIWTRAVLLGTTVTWRGTKFKVRPDQSVVDIPNAGAKSNGIGSTNRKVR.

At 1–6 (MPLLMD) the chain is on the lumenal side. A helical membrane pass occupies residues 7–27 (GLAYAGAIWSLIVFCVQAIGL). Residues 28–337 (YQLFRSYSRP…VRWLRVRKWT (310 aa)) lie on the Cytoplasmic side of the membrane. Position 95 (aspartate 95) is a short sequence motif, D1. Residue aspartate 160 is a short sequence motif, D2. Residue aspartate 285 is a short sequence motif, D3. Residue aspartate 285 is the Proton acceptor of the active site. A (Q/R)XXRW motif is present at residues 326–330 (RRVRW). The helical transmembrane segment at 338 to 358 (VLLATLVEPGVESMVCCMAFA) threads the bilayer. The Lumenal portion of the chain corresponds to 359 to 380 (HALTTTPWCPNPADWPIPHTWT). A helical membrane pass occupies residues 381-401 (ALWSIWLAAIAVWATLDYVVY). At 402–428 (HFLHSCRSIEKDADSPDFAQGNELMKR) the chain is on the cytoplasmic side. The chain crosses the membrane as a helical span at residues 429 to 449 (PFGAWILAWIGREILALPIWT). Residues 450 to 494 (RAVLLGTTVTWRGTKFKVRPDQSVVDIPNAGAKSNGIGSTNRKVR) lie on the Lumenal side of the membrane.

Belongs to the glycosyltransferase 2 family.

The protein localises to the golgi apparatus membrane. The enzyme catalyses an N-acylsphing-4-enine + UDP-alpha-D-glucose = a beta-D-glucosyl-(1&lt;-&gt;1')-N-acylsphing-4-enine + UDP + H(+). It participates in lipid metabolism; sphingolipid metabolism. Its function is as follows. Catalyzes the final step in the biosynthesis of the membrane lipid glucosylceramide (GluCer), the transfer of glucose to ceramide. Glucosylceramides play important roles in growth, differentiation and pathogenicity. The polypeptide is Ceramide glucosyltransferase (Pyricularia oryzae (strain 70-15 / ATCC MYA-4617 / FGSC 8958) (Rice blast fungus)).